Reading from the N-terminus, the 265-residue chain is Protein HesA, vegetative (265 aa).

The protein belongs to the HesA/MoeB/ThiF family.

This is Protein HesA, vegetative (hesA2) from Trichormus variabilis (strain ATCC 29413 / PCC 7937) (Anabaena variabilis).